A 1588-amino-acid chain; its full sequence is Ubiquitin carboxyl-terminal hydrolase 54 (1588 aa).

Position 12 is an omega-N-methylarginine (Arg-12). The USP domain maps to 31–352 (KGLSNEPGQN…QPLLLLYADP (322 aa)). Cys-42 (nucleophile) is an active-site residue. His-67, Cys-69, Cys-74, Cys-77, His-133, Cys-145, Cys-150, His-153, Cys-166, Cys-169, Cys-225, and Cys-229 together coordinate Zn(2+). His-302 functions as the Proton acceptor in the catalytic mechanism. 2 stretches are compositionally biased toward basic and acidic residues: residues 382–391 (GHLTDSECNQ) and 424–434 (SEGETLKEKQA). Disordered stretches follow at residues 382 to 519 (GHLT…PTWR), 555 to 577 (FTPD…RSQH), and 601 to 624 (ESGY…PPDS). Ser-424 is subject to Phosphoserine. Polar residues predominate over residues 453–471 (TVSNMIHSRPSLASQTSAG). Residues 499–513 (TESTSSEAKSSSSSK) show a composition bias toward low complexity. The span at 555 to 572 (FTPDEVSKPTANDIKDGG) shows a compositional bias: basic and acidic residues. Low complexity predominate over residues 601 to 616 (ESGYESSERNSSSPVS). Residues Ser-613 and Ser-616 each carry the phosphoserine modification. Residues 682 to 712 (ELDELQEEVVRRAQEQELRKKREKELEAAKG) are a coiled coil. 4 disordered regions span residues 801-834 (RSLQ…PQPT), 1089-1182 (QNTS…PDMY), 1221-1242 (SQVK…SHPR), and 1491-1561 (WGNL…RSPG). Positions 808 to 826 (QQQASSQQPVQPSASLPSQ) are enriched in low complexity. The segment covering 1126–1147 (GREHCRWVKQPRSPDGRERPPC) has biased composition (basic and acidic residues). Phosphoserine is present on Ser-1138. The span at 1510-1524 (PSSNLHVPLRSTWNS) shows a compositional bias: polar residues. Residues 1536 to 1547 (RRIDMPPDDDWR) show a composition bias toward basic and acidic residues.

This sequence belongs to the peptidase C19 family.

It carries out the reaction Thiol-dependent hydrolysis of ester, thioester, amide, peptide and isopeptide bonds formed by the C-terminal Gly of ubiquitin (a 76-residue protein attached to proteins as an intracellular targeting signal).. Its function is as follows. Deubiquitinase that specifically mediates 'Lys-63'-linked deubiquitination of substrates with a polyubiquitin chain composed of at least 3 ubiquitins. Specifically recognizes ubiquitin chain in position S2 and catalyzes cleavage of polyubiquitin within 'Lys-63'-linked chains. Not able to deubiquitinate substrates with shorter ubiquitin chains. Mediates deubiquitination of PLK4, maintaining PLK4 stability by reducing its ubiquitination-mediated degradation. This Mus musculus (Mouse) protein is Ubiquitin carboxyl-terminal hydrolase 54 (Usp54).